The chain runs to 533 residues: WD repeat-containing protein PAC11 (533 aa).

Positions 1–19 (MERLKQLEEKRRQLKELRE) are enriched in basic and acidic residues. A disordered region spans residues 1–36 (MERLKQLEEKRRQLKELRERRKQASLFPGSETMGHH). WD repeat units follow at residues 380-422 (FDEV…YLSL) and 432-475 (NHST…AIIG).

In terms of assembly, interacts with NUM1, when DYN1 is present.

Its subcellular location is the cytoplasm. It localises to the cytoskeleton. Functionally, required for viability in the absence of the kinesin-related CIN8 mitotic motor. May be a dynein intermediate chain. The protein is WD repeat-containing protein PAC11 (PAC11) of Saccharomyces cerevisiae (strain ATCC 204508 / S288c) (Baker's yeast).